The following is a 318-amino-acid chain: MNTRNRVVNSGLGASPASRPTRDPQDPSGRQGELSPVEDQREGLEAAPKGPSRESVVHAGQRRTSAYTLIAPNINRRNEIQRIAEQELANLEKWKEQNRAKPVHLVPRRLGGSQSETEVRQKQQLQLMQSKYKQKLKREESVRIKKEAEEAELQKMKAIQREKSNKLEEKKRLQENLRREAFREHQQYKTAEFLSKLNTESPDRSACQSAVCGPQSSTWKLPILPRDHSWARSWAYRDSLKAEENRKLQKMKDEQHQKSELLELKRQQQEQERAKIHQTEHRRVNNAFLDRLQGKSQPGGLEQSGGCWNMNSGNSWGI.

The interval Met1–Gly60 is disordered. 2 coiled-coil regions span residues Asn73–Tyr188 and Leu240–Glu280.

In terms of tissue distribution, highly expressed in placenta, small intestine, spleen, kidney, thymus, liver, salivary gland and testes. Weakly expressed in breast, skeletal muscle and colon. Highly expressed in breast cancer upon interaction between tumor cells and stromal cells in vitro. Expressed in blood mononuclear cells from patients with systemic lupus erythematosus (SLE).

Plays a role in M1 macrophage polarization and is required for the proper regulation of gene expression during M1 versus M2 macrophage differentiation. Might play a role in RELA/p65 and STAT1 phosphorylation and nuclear localization upon activation of macrophages. In Homo sapiens (Human), this protein is Epithelial-stromal interaction protein 1 (EPSTI1).